The chain runs to 696 residues: Lutropin-choriogonadotropic hormone receptor (696 aa).

The signal sequence occupies residues 1–27; the sequence is MRRRSLALRLLLALLLLPPPLPQTLLG. The Extracellular segment spans residues 28 to 358; it reads APCPEPCSCR…AFNPCEDIMG (331 aa). The N-linked (GlcNAc...) asparagine glycan is linked to N99. LRR repeat units follow at residues 122-147, 149-171, 172-196, 198-220, 221-244, and 250-271; these read LPRLKYLSICNTGIRKLPDVTKIFSS, FNFILEICDNLHITTVPANAFQG, MNNESITLKLYGNGFEEIQSHAFNG, TLISLELKENAHLKKMHNDAFRG, ARGPSILDISSTKLQALPSYGLES, and ATSSYSLKKLPSREKFTNLLDA. N-linked (GlcNAc...) asparagine glycans are attached at residues N174 and N195. N291, N299, and N313 each carry an N-linked (GlcNAc...) asparagine glycan. Y331 bears the Sulfotyrosine mark. A helical membrane pass occupies residues 359-386; that stretch reads YDFLRVLIWLINILAIMGNVTVLFVLLT. Topologically, residues 387–395 are cytoplasmic; that stretch reads SHYKLTVPR. The chain crosses the membrane as a helical span at residues 396 to 418; sequence FLMCNLSFADFCMGLYLLLIASV. Residues 419 to 439 lie on the Extracellular side of the membrane; that stretch reads DAQTKGQYYNHAIDWQTGNGC. Residues C439 and C514 are joined by a disulfide bond. A helical membrane pass occupies residues 440–462; it reads SVAGFFTVFASELSVYTLTVITL. Residues 463–482 lie on the Cytoplasmic side of the membrane; the sequence is ERWHTITYAIQLDQKLRLRH. Residues 483–505 traverse the membrane as a helical segment; it reads AIPIMLGGWLFSTLIAMLPLVGV. The Extracellular segment spans residues 506–525; that stretch reads SSYMKVSICLPMDVETTLSQ. The helical transmembrane segment at 526 to 547 threads the bilayer; the sequence is VYILTILILNVVAFIIICACYI. The Cytoplasmic portion of the chain corresponds to 548 to 570; the sequence is KIYFAVQNPELMATNKDTKIAKK. A helical membrane pass occupies residues 571–594; that stretch reads MAVLIFTDFTCMAPISFFAISAAL. The Extracellular portion of the chain corresponds to 595–605; the sequence is KVPLITVTNSK. The helical transmembrane segment at 606-626 threads the bilayer; it reads VLLVLFYPVNSCANPFLYAIF. The Cytoplasmic segment spans residues 627–696; that stretch reads TKAFRRDFFL…VMDKTCYKDC (70 aa). 2 S-palmitoyl cysteine lipidation sites follow: C643 and C644.

Belongs to the G-protein coupled receptor 1 family. FSH/LSH/TSH subfamily. Post-translationally, sulfated.

Its subcellular location is the cell membrane. Its function is as follows. Receptor for lutropin-choriogonadotropic hormone. The activity of this receptor is mediated by G proteins which activate adenylate cyclase. The chain is Lutropin-choriogonadotropic hormone receptor (LHCGR) from Sus scrofa (Pig).